A 217-amino-acid chain; its full sequence is Ribonuclease HII (217 aa).

In terms of domain architecture, RNase H type-2 spans 25–215 (KLIAGVDESG…VKHVISDINR (191 aa)). Residues Asp-31, Glu-32, and Asp-123 each contribute to the a divalent metal cation site.

It belongs to the RNase HII family. The cofactor is Mn(2+). It depends on Mg(2+) as a cofactor.

It localises to the cytoplasm. The enzyme catalyses Endonucleolytic cleavage to 5'-phosphomonoester.. Its function is as follows. Endonuclease that specifically degrades the RNA of RNA-DNA hybrids. This chain is Ribonuclease HII, found in Blochmanniella pennsylvanica (strain BPEN).